We begin with the raw amino-acid sequence, 576 residues long: MNVLELSEQEIIRRNSLNELRAMGIEPYPAAEYVTNAFSTDIKAEFKDDEEPRKVSVAGRMMSRRVMGKASFIELQDSKGRIQVYITRDDICPDENKEMYNTVFKRLLDLGDFIGIEGFVFRTQMGEISIHAKKLTVLSKSIKPLPIVKYKDGVAYDKFEDPELRYRQRYVDLAVNEEIKDIFIKRSKVYSSMREYFNSKGYMEVETPILQSIAGGAAARPFITHHNALDMPLYMRIASELYLKRLIVGGFEGVYEIGKNFRNEGMDRTHNPEFTCMEIYVAYKDYNWMMEFTEKMIEKICLDVNGTTQVKVGDNIIDFKAPYKRVTMLDSIKEHTGYDLTGMNEEQIREVCQKLNMEIDDTMGKGKLIDEIFGEFCEGTYIQPTFITDYPKEMSPLTKIHRSNPDLTERFELMVNGKELCNAYSELNDPIDQLERFEEQMKLSEKGDDEAMIIDKDFVRALEYGMPPTSGMGIGMDRLTMLMTGQSTIQEVLFFPQMRPEKITPKDTPAKFMELGISEDWVPVIQKAGYNLVSDMKEVNPQKLHMDICGINKKYKLELTNPTVDEVAGWIAKIEN.

Mg(2+) is bound by residues Glu412 and Glu419.

Belongs to the class-II aminoacyl-tRNA synthetase family. In terms of assembly, homodimer. Mg(2+) serves as cofactor.

The protein localises to the cytoplasm. The enzyme catalyses tRNA(Lys) + L-lysine + ATP = L-lysyl-tRNA(Lys) + AMP + diphosphate. This is Lysine--tRNA ligase from Phocaeicola vulgatus (strain ATCC 8482 / DSM 1447 / JCM 5826 / CCUG 4940 / NBRC 14291 / NCTC 11154) (Bacteroides vulgatus).